The sequence spans 699 residues: Glycine--tRNA ligase beta subunit (699 aa).

It belongs to the class-II aminoacyl-tRNA synthetase family. Tetramer of two alpha and two beta subunits.

It is found in the cytoplasm. The enzyme catalyses tRNA(Gly) + glycine + ATP = glycyl-tRNA(Gly) + AMP + diphosphate. The protein is Glycine--tRNA ligase beta subunit of Bradyrhizobium diazoefficiens (strain JCM 10833 / BCRC 13528 / IAM 13628 / NBRC 14792 / USDA 110).